A 98-amino-acid polypeptide reads, in one-letter code: Aspartyl/glutamyl-tRNA(Asn/Gln) amidotransferase subunit C (98 aa).

This sequence belongs to the GatC family. As to quaternary structure, heterotrimer of A, B and C subunits.

The enzyme catalyses L-glutamyl-tRNA(Gln) + L-glutamine + ATP + H2O = L-glutaminyl-tRNA(Gln) + L-glutamate + ADP + phosphate + H(+). It carries out the reaction L-aspartyl-tRNA(Asn) + L-glutamine + ATP + H2O = L-asparaginyl-tRNA(Asn) + L-glutamate + ADP + phosphate + 2 H(+). In terms of biological role, allows the formation of correctly charged Asn-tRNA(Asn) or Gln-tRNA(Gln) through the transamidation of misacylated Asp-tRNA(Asn) or Glu-tRNA(Gln) in organisms which lack either or both of asparaginyl-tRNA or glutaminyl-tRNA synthetases. The reaction takes place in the presence of glutamine and ATP through an activated phospho-Asp-tRNA(Asn) or phospho-Glu-tRNA(Gln). This Kocuria rhizophila (strain ATCC 9341 / DSM 348 / NBRC 103217 / DC2201) protein is Aspartyl/glutamyl-tRNA(Asn/Gln) amidotransferase subunit C.